The following is a 71-amino-acid chain: Small ribosomal subunit protein bS18 (71 aa).

This sequence belongs to the bacterial ribosomal protein bS18 family. Part of the 30S ribosomal subunit. Forms a tight heterodimer with protein bS6.

In terms of biological role, binds as a heterodimer with protein bS6 to the central domain of the 16S rRNA, where it helps stabilize the platform of the 30S subunit. In Dichelobacter nodosus (strain VCS1703A), this protein is Small ribosomal subunit protein bS18.